A 529-amino-acid polypeptide reads, in one-letter code: MDALALWQHYQDWLYYHPELEFYVDVSRMGLTPEVVHRLEPAFERAFEQMKELEAGAIANPDEGRMVGHYWLRDPDLAPSPELRSQIRDAIAQVKQFSQQVHSGAIAPPQGGHFTEILSIGIGGSALGPQFVAAALAPVHPPLNIHFLDNTDPAGFERVFAELGDRLRTTLVLVISKSGGTPETRNGMLEAQARFQRAGLAFADHAVAVTLPGSGLAQVAESNGWLAIFPMFDWVGGRTSELSTVGLLPAALQGIDIDDLLMGAKLMDQATRVPNIRQNPAALLALAWHHAGKGRGEKDMVILPYKDSLLLFSRYLQQLVMESLGKETDLNGNIVHQGIAVYGNKGTTDQHAYVQQLRDGLPNFFVTFIEVLRDGQEPSIEVEPGITAGDYLSGLLLGTRQALYEKNRPSLTVTIPEVTPKTVGALIALYERAVGLYGFLVNINAYHQPGVEAGKKAAAANLALQRQIVKVLEQSDEPLDLGAIAGAINAPDQLERIYLILRHLAANDRGIEQLGDPAQPSQLQFRWQR.

E322 serves as the catalytic Proton donor. Residues H351 and K455 contribute to the active site.

Belongs to the GPI family.

Its subcellular location is the cytoplasm. The catalysed reaction is alpha-D-glucose 6-phosphate = beta-D-fructose 6-phosphate. It functions in the pathway carbohydrate biosynthesis; gluconeogenesis. It participates in carbohydrate degradation; glycolysis; D-glyceraldehyde 3-phosphate and glycerone phosphate from D-glucose: step 2/4. Catalyzes the reversible isomerization of glucose-6-phosphate to fructose-6-phosphate. The chain is Glucose-6-phosphate isomerase from Thermosynechococcus vestitus (strain NIES-2133 / IAM M-273 / BP-1).